The primary structure comprises 134 residues: Phosphoribosyl-AMP cyclohydrolase (134 aa).

D80 provides a ligand contact to Mg(2+). C81 lines the Zn(2+) pocket. D82 and D84 together coordinate Mg(2+). Zn(2+) contacts are provided by C98 and C105.

It belongs to the PRA-CH family. In terms of assembly, homodimer. Mg(2+) serves as cofactor. Requires Zn(2+) as cofactor.

The protein localises to the cytoplasm. It catalyses the reaction 1-(5-phospho-beta-D-ribosyl)-5'-AMP + H2O = 1-(5-phospho-beta-D-ribosyl)-5-[(5-phospho-beta-D-ribosylamino)methylideneamino]imidazole-4-carboxamide. It participates in amino-acid biosynthesis; L-histidine biosynthesis; L-histidine from 5-phospho-alpha-D-ribose 1-diphosphate: step 3/9. Its function is as follows. Catalyzes the hydrolysis of the adenine ring of phosphoribosyl-AMP. This chain is Phosphoribosyl-AMP cyclohydrolase, found in Bordetella pertussis (strain Tohama I / ATCC BAA-589 / NCTC 13251).